A 657-amino-acid polypeptide reads, in one-letter code: Translation factor GUF1, mitochondrial (657 aa).

The transit peptide at 1–39 (MRGCLQSVKWLTSALRPSQSLASSTRYPRRLLSTSAPRN) directs the protein to the mitochondrion. One can recognise a tr-type G domain in the interval 59–239 (ERFRNFCIVA…TVIEQIPAPV (181 aa)). Residues 68 to 75 (AHVDHGKS), 132 to 136 (DTPGH), and 186 to 189 (NKVD) each bind GTP.

The protein belongs to the TRAFAC class translation factor GTPase superfamily. Classic translation factor GTPase family. LepA subfamily.

It localises to the mitochondrion inner membrane. The enzyme catalyses GTP + H2O = GDP + phosphate + H(+). Its function is as follows. Promotes mitochondrial protein synthesis. May act as a fidelity factor of the translation reaction, by catalyzing a one-codon backward translocation of tRNAs on improperly translocated ribosomes. Binds to mitochondrial ribosomes in a GTP-dependent manner. This Ajellomyces capsulatus (strain G186AR / H82 / ATCC MYA-2454 / RMSCC 2432) (Darling's disease fungus) protein is Translation factor GUF1, mitochondrial.